A 190-amino-acid chain; its full sequence is dTTP/UTP pyrophosphatase (190 aa).

The active-site Proton acceptor is aspartate 70.

Belongs to the Maf family. YhdE subfamily. It depends on a divalent metal cation as a cofactor.

Its subcellular location is the cytoplasm. The catalysed reaction is dTTP + H2O = dTMP + diphosphate + H(+). The enzyme catalyses UTP + H2O = UMP + diphosphate + H(+). Functionally, nucleoside triphosphate pyrophosphatase that hydrolyzes dTTP and UTP. May have a dual role in cell division arrest and in preventing the incorporation of modified nucleotides into cellular nucleic acids. This chain is dTTP/UTP pyrophosphatase, found in Paramagnetospirillum magneticum (strain ATCC 700264 / AMB-1) (Magnetospirillum magneticum).